A 122-amino-acid polypeptide reads, in one-letter code: Large ribosomal subunit protein uL14c (122 aa).

It belongs to the universal ribosomal protein uL14 family. As to quaternary structure, part of the 50S ribosomal subunit.

Its subcellular location is the plastid. The protein localises to the chloroplast. Functionally, binds to 23S rRNA. This chain is Large ribosomal subunit protein uL14c, found in Oltmannsiellopsis viridis (Marine flagellate).